Consider the following 509-residue polypeptide: Poly(A) RNA polymerase GLD2-A (509 aa).

The disordered stretch occupies residues 88–107; that stretch reads PGSPSSSFQNRKRRSDEGNV. Asp240 and Asp242 together coordinate Mg(2+). Residues 409–462 enclose the PAP-associated domain; that stretch reads LGDLLLGFLKYFAVEFDWSKDIISVREGKALPRSDDYLWRNKYICVEEPFDGTN.

It belongs to the DNA polymerase type-B-like family. GLD2 subfamily. As to quaternary structure, component of a complex at least composed of cpeb1, cpsf1, tent2/gld2, pabpc1/ePAB, parn and sympk. Following oocyte maturation, parn is expelled from the complex. Interacts with rbfox2 and sympk. Mg(2+) is required as a cofactor. It depends on Mn(2+) as a cofactor.

It is found in the cytoplasm. The catalysed reaction is RNA(n) + ATP = RNA(n)-3'-adenine ribonucleotide + diphosphate. Its function is as follows. Cytoplasmic poly(A) RNA polymerase that adds successive AMP monomers to the 3'-end of specific RNAs, forming a poly(A) tail. In contrast to the canonical nuclear poly(A) RNA polymerase, it only adds poly(A) to selected cytoplasmic mRNAs during oocyte maturation. Plays a central role during oocyte maturation by mediating polyadenylation of dormant mRNAs, which contain 5'AAUAAA-3' sequence in their 3'UTR. In immature oocytes, polyadenylation of poly(A) tails is counteracted by the ribonuclease parn. During maturation parn is excluded from the ribonucleoprotein complex, allowing poly(A) elongation and activation of mRNAs. May not play a role in replication-dependent histone mRNA degradation. This Xenopus laevis (African clawed frog) protein is Poly(A) RNA polymerase GLD2-A (tent2-a).